Here is a 912-residue protein sequence, read N- to C-terminus: Non-lysosomal glucosylceramidase (912 aa).

Residues 886–912 form a disordered region; sequence HKKNSSRPAVTQGTAPSQPECGPKRSL. The span at 891 to 902 shows a compositional bias: polar residues; the sequence is SRPAVTQGTAPS.

Belongs to the non-lysosomal glucosylceramidase family.

It is found in the endoplasmic reticulum membrane. Its subcellular location is the golgi apparatus membrane. It catalyses the reaction a beta-D-glucosyl-(1&lt;-&gt;1')-N-acylsphing-4-enine + H2O = an N-acylsphing-4-enine + D-glucose. The catalysed reaction is a beta-D-galactosyl-(1&lt;-&gt;1')-N-acylsphing-4-enine + H2O = an N-acylsphing-4-enine + D-galactose. The enzyme catalyses beta-D-glucosyl-(1-&gt;3)-O-lithocholate + H2O = lithocholate + D-glucose. It carries out the reaction beta-D-glucosyl-(1-&gt;3)-O-chenodeoxycholate + H2O = chenodeoxycholate + D-glucose. It catalyses the reaction a di-trans,poly-cis-dolichyl beta-D-glucosyl phosphate + chenodeoxycholate = beta-D-glucosyl-(1-&gt;3)-O-chenodeoxycholate + a di-trans,poly-cis-dolichyl phosphate + H(+). The catalysed reaction is octyl beta-D-glucose + chenodeoxycholate = beta-D-glucosyl-(1-&gt;3)-O-chenodeoxycholate + octan-1-ol. The enzyme catalyses cholesteryl 3-beta-D-glucoside + H2O = cholesterol + D-glucose. It carries out the reaction a beta-D-glucosyl-(1&lt;-&gt;1')-N-acylsphing-4-enine + cholesterol = cholesteryl 3-beta-D-glucoside + an N-acylsphing-4-enine. It catalyses the reaction beta-D-glucosyl-N-(9Z-octadecenoyl)-sphing-4E-enine + cholesterol = N-(9Z-octadecenoyl)-sphing-4-enine + cholesteryl 3-beta-D-glucoside. The catalysed reaction is a beta-D-galactosyl-(1&lt;-&gt;1')-N-acylsphing-4-enine + cholesterol = cholesteryl 3-beta-D-galactoside + an N-acylsphing-4-enine. The enzyme catalyses 1-(beta-D-galactosyl)-N-dodecanoylsphing-4-enine + cholesterol = cholesteryl 3-beta-D-galactoside + N-dodecanoylsphing-4-enine. Its pathway is lipid metabolism; sphingolipid metabolism. The protein operates within steroid metabolism; cholesterol metabolism. Enzymatic activity is dependent on membrane association and requires the presence of lipids. Functionally, non-lysosomal glucosylceramidase that catalyzes the hydrolysis of glucosylceramides/GlcCers (such as beta-D-glucosyl-(1&lt;-&gt;1')-N-acylsphing-4-enine) to free glucose and ceramides (such as N-acylsphing-4-enine). GlcCers are membrane glycosphingolipids that have a wide intracellular distribution. They are the main precursors of more complex glycosphingolipids that play a role in cellular growth, differentiation, adhesion, signaling, cytoskeletal dynamics and membrane properties. Involved in the transglucosylation of cholesterol, transfers glucose from GlcCer to cholesterol, thereby modifying its water solubility and biological properties. Under specific conditions, may catalyze the reverse reaction, transferring glucose from cholesteryl-3-beta-D-glucoside to ceramide (such as N-acylsphing-4-enine). May play a role in the metabolism of bile acids. Able to hydrolyze bile acid 3-O-glucosides as well as to produce bile acid-glucose conjugates thanks to a bile acid glucosyl transferase activity. Catalyzes the hydrolysis of galactosylceramides/GalCers (such as beta-D-galactosyl-(1&lt;-&gt;1')-N-acylsphing-4-enine), as well as the galactosyl transfer between GalCers and cholesterol in vitro with lower activity compared with their activity against GlcCers. In Rattus norvegicus (Rat), this protein is Non-lysosomal glucosylceramidase.